Reading from the N-terminus, the 286-residue chain is Bifunctional protein FolD (286 aa).

NADP(+) is bound by residues 167–169 (GRS) and Ile233.

It belongs to the tetrahydrofolate dehydrogenase/cyclohydrolase family. Homodimer.

The enzyme catalyses (6R)-5,10-methylene-5,6,7,8-tetrahydrofolate + NADP(+) = (6R)-5,10-methenyltetrahydrofolate + NADPH. It carries out the reaction (6R)-5,10-methenyltetrahydrofolate + H2O = (6R)-10-formyltetrahydrofolate + H(+). The protein operates within one-carbon metabolism; tetrahydrofolate interconversion. Its function is as follows. Catalyzes the oxidation of 5,10-methylenetetrahydrofolate to 5,10-methenyltetrahydrofolate and then the hydrolysis of 5,10-methenyltetrahydrofolate to 10-formyltetrahydrofolate. The chain is Bifunctional protein FolD from Limosilactobacillus reuteri (strain DSM 20016) (Lactobacillus reuteri).